A 488-amino-acid chain; its full sequence is MWTFQADRLSGIVSALAALCVACCAQSPSTGNISVVKEIVDKLLKGYDVRLRPDFGGNPVTVGMSIHISSIDQISEVNMDYTITMYFQQSWRDKRLAYNDLPLNLTLDNRVADQLWLPDTYFLNDKKSFLHGVTVKNRMIRLHPDGTVLYGLRITTTAACMMDLRRYPLDQQNCTLEIESYGYTVDDIVFFWQGNDSAVTGMEVLELPQFTIIEQRLVSREVVFTTGSYLRLSLSFRIKRNIGYFILQTYMPSILITILSWVSFWINYDASAARVALGVTTVLTMTTINTHLRETLPKIPYVKAIDVYLMGCFVFVFLALLEYAFVNYIFFGRGPRQQKKQSERISKANNERHRYEEKRVREQVDPYGNILLSTLDMNNELLATDMMSSVGDSRNSVMSFEGSGIQFRKPLASRDGFGHHPTLDRHVPLTHHAAARNRANCRLRRRSSKLKLKIPDLTDVSTIDKWSRIIFPITFGFFNLVYWLYYVN.

Residues 1-25 (MWTFQADRLSGIVSALAALCVACCA) form the signal peptide. Topologically, residues 26–244 (QSPSTGNISV…SFRIKRNIGY (219 aa)) are extracellular. Asn-32, Asn-104, Asn-173, and Asn-195 each carry an N-linked (GlcNAc...) asparagine glycan. The cysteines at positions 160 and 174 are disulfide-linked. Transmembrane regions (helical) follow at residues 245-266 (FILQTYMPSILITILSWVSFWI), 271-292 (SAARVALGVTTVLTMTTINTHL), and 304-326 (AIDVYLMGCFVFVFLALLEYAFV). The Cytoplasmic portion of the chain corresponds to 327-465 (NYIFFGRGPR…DLTDVSTIDK (139 aa)). The helical transmembrane segment at 466-487 (WSRIIFPITFGFFNLVYWLYYV) threads the bilayer.

Belongs to the ligand-gated ion channel (TC 1.A.9) family. Gamma-aminobutyric acid receptor (TC 1.A.9.5) subfamily. GABRB4 sub-subfamily. In terms of assembly, generally pentameric. There are five types of GABA(A) receptor chains: alpha, beta, gamma, delta, and rho.

The protein localises to the postsynaptic cell membrane. It localises to the cell membrane. GABA, the major inhibitory neurotransmitter in the vertebrate brain, mediates neuronal inhibition by binding to the GABA/benzodiazepine receptor and opening an integral chloride channel. This chain is Gamma-aminobutyric acid receptor subunit beta-4 (GABRB4), found in Gallus gallus (Chicken).